A 91-amino-acid chain; its full sequence is Potassium channel toxin Meg-beta-KTx1 (91 aa).

Residues 1–19 (MQRNLVVLLFLGMVALSSC) form the signal peptide. Positions 20 to 27 (GLREKHFQ) are excised as a propeptide. Residues 54–91 (QFGCPAYQGYCDDHCQDIKKQEGFCHGFKCKCGIPMGF) enclose the BetaSPN-type CS-alpha/beta domain. Disulfide bonds link C57–C78, C64–C83, and C68–C85.

This sequence belongs to the long chain scorpion toxin family. Class 1 subfamily. As to expression, expressed by the venom gland.

It is found in the secreted. Its function is as follows. Inhibits voltage-gated potassium channel. The sequence is that of Potassium channel toxin Meg-beta-KTx1 from Mesobuthus gibbosus (Mediterranean checkered scorpion).